We begin with the raw amino-acid sequence, 393 residues long: Cytotoxic and regulatory T-cell molecule (393 aa).

The signal sequence occupies residues 1–17; the sequence is MWWRVLSLLAWFPLQEA. An Ig-like V-type domain is found at 18–114; the sequence is SLTNHTETIT…VSTKEVKVIV (97 aa). Residues 18–287 lie on the Extracellular side of the membrane; that stretch reads SLTNHTETIT…YLGLARKKSG (270 aa). N-linked (GlcNAc...) asparagine glycans are attached at residues N21, N87, and N178. 2 disulfides stabilise this stretch: C38–C98 and C141–C196. An Ig-like C2-type domain is found at 118-210; sequence PFKPILEASV…RGLQGRKLVA (93 aa). A disordered region spans residues 225–273; the sequence is SDALERNSLSSQDPQQPTSTVSVTEDSSTSEIDKEEKEQTTQDPDLTTE. A compositionally biased stretch (polar residues) spans 231–241; it reads NSLSSQDPQQP. Residues 242–254 show a composition bias toward low complexity; the sequence is TSTVSVTEDSSTS. Basic and acidic residues predominate over residues 255-264; that stretch reads EIDKEEKEQT. The chain crosses the membrane as a helical span at residues 288-308; that stretch reads ILLLTLVSFLIFILFIIVQLF. The Cytoplasmic segment spans residues 309-393; sequence IMKLRKAHVI…KHIQVPESIV (85 aa). 2 stretches are compositionally biased toward basic and acidic residues: residues 328 to 348 and 374 to 387; these read HTLESYRSRSNNEETSSEEKN and ENVQHSKLEEKHIQ. Disordered regions lie at residues 328 to 354 and 374 to 393; these read HTLESYRSRSNNEETSSEEKNGQSSHP and ENVQHSKLEEKHIQVPESIV. The PDZ-binding motif lies at 390–393; sequence ESIV.

It belongs to the nectin family. In terms of assembly, monomer. May form homodimer (via Ig-like V-type domain). Interacts (via Ig-like V-type domain) with CADM1 (via Ig-like V-type domain); the interaction competes with CRTAM homodimerization and CADM1 homodimerization. Interacts (via PDZ-binding motif) with SCRIB (via PDZ domain 3); the interaction promotes CRTAM and SCRIB polarization in a subset of CD4+ T-cells. As to expression, in the immune system, expression is restricted to activated class-I MHC-restricted cells, including NKT and CD8 T-cells. Strongly expressed in spleen, thymus, small intestine, peripheral blood leukocyte, and in Purkinje neurons in cerebellum. Expressed at much lower levels in testis, ovary, colon, lung and lymphoid tissues.

The protein resides in the cell membrane. In terms of biological role, mediates heterophilic cell-cell adhesion which regulates the activation, differentiation and tissue retention of various T-cell subsets. Interaction with CADM1 promotes natural killer (NK) cell cytotoxicity and IFNG/interferon-gamma secretion by CD8+ T-cells in vitro as well as NK cell-mediated rejection of tumors expressing CADM1 in vivo. Regulates CD8+ T-cell proliferation in response to T-cell receptor (TCR) activation. Appears to be dispensable for CD8+ T-cell-mediated cytotoxicity. Interaction with SCRIB promotes the late phase of cellular polarization of a subset of CD4+ T-cells, which in turn regulates TCR-mediated proliferation and IFNG, IL17 and IL22 production. By interacting with CADM1 on CD8+ dendritic cells, regulates the retention of activated CD8+ T-cells within the draining lymph node. Required for the intestinal retention of intraepithelial CD4+ CD8+ T-cells and, to a lesser extent, intraepithelial and lamina propria CD8+ T-cells and CD4+ T-cells. Interaction with CADM1 promotes the adhesion to gut-associated CD103+ dendritic cells, which may facilitate the expression of gut-homing and adhesion molecules on T-cells and the conversion of CD4+ T-cells into CD4+ CD8+ T-cells. The polypeptide is Cytotoxic and regulatory T-cell molecule (Homo sapiens (Human)).